Here is a 313-residue protein sequence, read N- to C-terminus: MVRGDDQLNGLQGGKRALDILCVATERTVSAFAYEEIGETSTEGDKRRERLRRLRRLINYSLSTTMNSSLSKRLKIDECKNQDPEQNPNRVASSPSSCHLESKRPQKVVSNKPVRNRKPVIVTDEDRTPTEWLIDVMREVNGMDAKLIFVKVLPNSDVDELQTRLMMPWKQILDMDFLNEEELEKIDRHHKKISASDKGADVIVVNSKGLQRKLKLKRWDMTSTSNYVLGLGWNKVVTDNILQRGTRLRIWSFHSPDMLFFAFVLSDPDPAPTECLNLLAKLCEETTCLEALQEANRMSSLVSDTELDLELRL.

The interval 80–110 (KNQDPEQNPNRVASSPSSCHLESKRPQKVVS) is disordered. Positions 84 to 99 (PEQNPNRVASSPSSCH) are enriched in polar residues. The segment at residues 169–267 (WKQILDMDFL…MLFFAFVLSD (99 aa)) is a DNA-binding region (TF-B3).

Its subcellular location is the nucleus. The chain is B3 domain-containing protein At2g31720 (ARF70) from Arabidopsis thaliana (Mouse-ear cress).